Consider the following 79-residue polypeptide: Conotoxin VnMEKL-024 (79 aa).

A signal peptide spans 1-19 (MQKLTILLLVAAVLMSTQA). Positions 20 to 50 (LIRGGVEKRQEAKRNFFSKRKTTAESWWEGE) are excised as a propeptide. 3 cysteine pairs are disulfide-bonded: cysteine 51/cysteine 65, cysteine 58/cysteine 69, and cysteine 64/cysteine 76.

This sequence belongs to the conotoxin O2 superfamily. In terms of tissue distribution, expressed by the venom duct.

Its subcellular location is the secreted. This is Conotoxin VnMEKL-024 from Conus ventricosus (Mediterranean cone).